Consider the following 261-residue polypeptide: Leucine-rich repeat-containing protein 61 (261 aa).

LRR repeat units lie at residues 54–75 (GLEWLDLSGNALTQLGPLASLR), 76–97 (QLAVLNVADNRLTGLEPLAACE), and 98–119 (NLQCLNAAGNLLAGPAQLQCLA). The region spanning 138 to 183 (NPLCASPCYWASVRELLPGLKVLDGERVSGRGSDFYQLCRDLDSSL) is the LRRCT domain.

This is Leucine-rich repeat-containing protein 61 (LRRC61) from Bos taurus (Bovine).